The following is a 605-amino-acid chain: Insulin-like growth factor-binding protein complex acid labile subunit (605 aa).

A signal peptide spans 1 to 27 (MALRKGGLALALLLLSWVALGPRSLEG). Residues 32 to 74 (TPGEAEGPACPAACVCSYDDDADELSVFCSSRNLTRLPDGVPG) enclose the LRRNT domain. Intrachain disulfides connect Cys-41-Cys-47 and Cys-45-Cys-60. N-linked (GlcNAc...) asparagine glycans are attached at residues Asn-64, Asn-85, and Asn-96. LRR repeat units follow at residues 75–96 (GTQA…AFQN), 99–120 (SLGF…ALLG), 123–144 (NLCH…TFAH), 147–168 (ALAS…LFEG), 171–192 (SLWD…AFRG), 195–216 (SLRE…LFSG), 219–240 (ELRE…VFVQ), 243–264 (RLQK…AFLG), 267–288 (ALRW…TFPG), 291–312 (GLRV…TFKD), 315–336 (FLEE…SFEG), 339–360 (QLEV…AFLG), 363–384 (NVAV…VFRG), 387–408 (KLHS…TFTG), 411–432 (GLRR…SLWG), 435–456 (ELLE…LFQG), 459–480 (KLEY…ALGP), 483–504 (RAFW…LLAP), and 507–528 (RLRY…PPGL). A glycan (N-linked (GlcNAc...) asparagine) is linked at Asn-368. N-linked (GlcNAc...) asparagine glycosylation is present at Asn-515. In terms of domain architecture, LRRCT spans 536–605 (NPWDCGCPLK…DLSEAHFAPC (70 aa)). 3 disulfides stabilise this stretch: Cys-540/Cys-583, Cys-542/Cys-605, and Cys-566/Cys-571. Residue Asn-580 is glycosylated (N-linked (GlcNAc...) asparagine).

In terms of assembly, forms a ternary complex with IGF1 and IGFBP3. In terms of tissue distribution, plasma.

It localises to the secreted. It is found in the extracellular space. In terms of biological role, involved in protein-protein interactions that result in protein complexes, receptor-ligand binding or cell adhesion. In Homo sapiens (Human), this protein is Insulin-like growth factor-binding protein complex acid labile subunit (IGFALS).